A 49-amino-acid polypeptide reads, in one-letter code: Large ribosomal subunit protein bL33A (49 aa).

Belongs to the bacterial ribosomal protein bL33 family.

This chain is Large ribosomal subunit protein bL33A, found in Geobacillus kaustophilus (strain HTA426).